Reading from the N-terminus, the 585-residue chain is ATP-dependent lipid A-core flippase (585 aa).

Helical transmembrane passes span 25-45 (FLAALACMGVASLAEPVFPAI), 63-83 (WLFYPLAIMGIFLVRAIFGFL), 127-146 (IAYDVTGVAGAATNALTSLI), 150-170 (LSIVGLLVWLLWLNWQLTLIT), 250-270 (QSPLVQFFAASGVAIIMGVAL), and 277-297 (QTTVGSFVSFVTAMLMLMAPL). An ABC transmembrane type-1 domain is found at 26–309 (LAALACMGVA…VTDVNAPIQR (284 aa)). The ABC transporter domain maps to 341-577 (VEFDGVTFTY…DGLYARLYRM (237 aa)). Residue 375-382 (GPSGSGKT) coordinates ATP.

The protein belongs to the ABC transporter superfamily. Lipid exporter (TC 3.A.1.106) family. As to quaternary structure, homodimer.

Its subcellular location is the cell inner membrane. The catalysed reaction is ATP + H2O + lipid A-core oligosaccharideSide 1 = ADP + phosphate + lipid A-core oligosaccharideSide 2.. Functionally, involved in lipopolysaccharide (LPS) biosynthesis. Translocates lipid A-core from the inner to the outer leaflet of the inner membrane. Transmembrane domains (TMD) form a pore in the inner membrane and the ATP-binding domain (NBD) is responsible for energy generation. This Dechloromonas aromatica (strain RCB) protein is ATP-dependent lipid A-core flippase.